A 265-amino-acid polypeptide reads, in one-letter code: Apolipoprotein A-I (265 aa).

The signal sequence occupies residues 1–18 (MKAVVLTLAVLFLTGSQA). A run of 2 repeats spans residues 67-88 (LKLL…EQLG) and 89-110 (PVTR…QEMN). The tract at residues 67-265 (LKLLDNWDSL…DEASKKLNAQ (199 aa)) is 10 X approximate tandem repeats. Methionine sulfoxide is present on M109. Residues 111-121 (KDLQEVKQKVQ) form a 3; half-length repeat. 5 repeat units span residues 122-142 (PYLD…RQKV), 144-165 (PLGE…DKLT), 166-187 (PLAE…QQLA), 188-209 (PYSD…EGGG), and 210-230 (SLVQ…EKAK). A 9; half-length repeat occupies 231-241 (PALEDLRQGLL). Repeat unit 10 spans residues 242–265 (PVLENLKVSILAAIDEASKKLNAQ).

Belongs to the apolipoprotein A1/A4/E family. Homodimer. Interacts with APOA1BP and CLU. Component of a sperm activating protein complex (SPAP), consisting of APOA1, an immunoglobulin heavy chain, an immunoglobulin light chain and albumin. Interacts with NDRG1. Interacts with SCGB3A2. Interacts with NAXE and YJEFN3. Glycosylated. Post-translationally, palmitoylated. In terms of processing, phosphorylation sites are present in the extracellular medium. As to expression, major protein of plasma HDL, also found in chylomicrons.

The protein resides in the secreted. Functionally, participates in the reverse transport of cholesterol from tissues to the liver for excretion by promoting cholesterol efflux from tissues and by acting as a cofactor for the lecithin cholesterol acyltransferase (LCAT). As part of the SPAP complex, activates spermatozoa motility. This is Apolipoprotein A-I (APOA1) from Balaenoptera acutorostrata scammoni (North Pacific minke whale).